Reading from the N-terminus, the 991-residue chain is Antigenic heat-stable 120 kDa protein (991 aa).

3 disordered regions span residues 1-37 (DTSE…TPAL), 54-73 (TPSM…TSDP), and 348-384 (GQSK…TNQP). Residues 12 to 29 (EYTEEQKQTEEQEQKEFL) are compositionally biased toward basic and acidic residues. Residues 348 to 373 (GQSKEQPLITPQQTTSSSVEPPQYKQ) are compositionally biased toward polar residues.

The protein localises to the cytoplasm. The polypeptide is Antigenic heat-stable 120 kDa protein (sca4) (Rickettsia sibirica).